The chain runs to 366 residues: Ribosomal RNA large subunit methyltransferase M (366 aa).

S-adenosyl-L-methionine-binding positions include serine 188, 221-224, aspartate 240, aspartate 260, and aspartate 277; that span reads CPGG. Lysine 306 serves as the catalytic Proton acceptor.

This sequence belongs to the class I-like SAM-binding methyltransferase superfamily. RNA methyltransferase RlmE family. RlmM subfamily. Monomer.

Its subcellular location is the cytoplasm. It catalyses the reaction cytidine(2498) in 23S rRNA + S-adenosyl-L-methionine = 2'-O-methylcytidine(2498) in 23S rRNA + S-adenosyl-L-homocysteine + H(+). Catalyzes the 2'-O-methylation at nucleotide C2498 in 23S rRNA. The chain is Ribosomal RNA large subunit methyltransferase M from Shigella dysenteriae serotype 1 (strain Sd197).